Here is a 191-residue protein sequence, read N- to C-terminus: MKITGISGSPRKGQNCEKIIGAALEVAKERGFETDTVFISNEEVAPCKACGACRDQDFCVIDDDMDEIYEKMRAADGIIVAAPVYMGNYPAQLKALFDRSVLLRRKNFALKNKVGAALSVGGSRNGGQEKTIQSIHDWMHIHGMIVVGDNSHFGGITWNPAEEDTVGMQTVSETAKKLCDVLELIQKNRDK.

[4Fe-4S] cluster is bound by residues Cys-47, Cys-50, Cys-53, and Cys-59.

This sequence belongs to the SsuE family. Isf subfamily. In terms of assembly, homodimer. FMN is required as a cofactor. The cofactor is [4Fe-4S] cluster.

Redox-active protein probably involved in electron transport during fermentation of acetate to methane. This Methanosarcina thermophila protein is Iron-sulfur flavoprotein (isf).